Reading from the N-terminus, the 219-residue chain is Adenylate kinase (219 aa).

Residue 10-15 participates in ATP binding; the sequence is GAGKGT. The NMP stretch occupies residues 30–59; that stretch reads STGDMLRAAVKAETPVGLEAKKVMDAGQLV. AMP-binding positions include threonine 31, arginine 36, 57–59, 85–88, and glutamine 92; these read QLV and GFPR. Residues 122-159 form an LID region; the sequence is GRRVHLSSGRTYHVLFNPPKQEGLDDETGEPLVQRADD. ATP is bound by residues arginine 123 and 132–133; that span reads TY. Arginine 156 and arginine 167 together coordinate AMP. Residue glycine 203 participates in ATP binding.

This sequence belongs to the adenylate kinase family. As to quaternary structure, monomer.

It is found in the cytoplasm. The enzyme catalyses AMP + ATP = 2 ADP. Its pathway is purine metabolism; AMP biosynthesis via salvage pathway; AMP from ADP: step 1/1. Catalyzes the reversible transfer of the terminal phosphate group between ATP and AMP. Plays an important role in cellular energy homeostasis and in adenine nucleotide metabolism. The sequence is that of Adenylate kinase from Chlorobium limicola (strain DSM 245 / NBRC 103803 / 6330).